Consider the following 315-residue polypeptide: Large ribosomal subunit protein uL10 (315 aa).

The span at 285–294 (AAAPAASAAP) shows a compositional bias: low complexity. The tract at residues 285 to 315 (AAAPAASAAPAKEEKEESEESDDDMGFGLFD) is disordered. Positions 300–309 (EESEESDDDM) are enriched in acidic residues.

This sequence belongs to the universal ribosomal protein uL10 family. P0 forms a pentameric complex by interaction with dimers of P1 and P2. Phosphorylated.

In terms of biological role, ribosomal protein P0 is the functional equivalent of E.coli protein L10. The chain is Large ribosomal subunit protein uL10 (RPLP0) from Lithobates sylvaticus (Wood frog).